The primary structure comprises 276 residues: Formamidopyrimidine-DNA glycosylase (276 aa).

Catalysis depends on P2, which acts as the Schiff-base intermediate with DNA. Residue E3 is the Proton donor of the active site. K60 serves as the catalytic Proton donor; for beta-elimination activity. Residues H93 and R112 each contribute to the DNA site. The FPG-type zinc-finger motif lies at N240 to P274. Catalysis depends on R264, which acts as the Proton donor; for delta-elimination activity.

Belongs to the FPG family. Monomer. Requires Zn(2+) as cofactor.

It catalyses the reaction Hydrolysis of DNA containing ring-opened 7-methylguanine residues, releasing 2,6-diamino-4-hydroxy-5-(N-methyl)formamidopyrimidine.. The enzyme catalyses 2'-deoxyribonucleotide-(2'-deoxyribose 5'-phosphate)-2'-deoxyribonucleotide-DNA = a 3'-end 2'-deoxyribonucleotide-(2,3-dehydro-2,3-deoxyribose 5'-phosphate)-DNA + a 5'-end 5'-phospho-2'-deoxyribonucleoside-DNA + H(+). Its function is as follows. Involved in base excision repair of DNA damaged by oxidation or by mutagenic agents. Acts as a DNA glycosylase that recognizes and removes damaged bases. Has a preference for oxidized purines, such as 7,8-dihydro-8-oxoguanine (8-oxoG). Has AP (apurinic/apyrimidinic) lyase activity and introduces nicks in the DNA strand. Cleaves the DNA backbone by beta-delta elimination to generate a single-strand break at the site of the removed base with both 3'- and 5'-phosphates. This chain is Formamidopyrimidine-DNA glycosylase, found in Bacillus anthracis.